The following is a 385-amino-acid chain: Probable thioesterase PNKD (385 aa).

A compositionally biased stretch (polar residues) spans 32–42; that stretch reads KASQNRTRALQ. The tract at residues 32-56 is disordered; the sequence is KASQNRTRALQSHSSPECKEEPEPL. Residue Val-121 is modified to Phosphoserine. Residues His-172, His-174, Asp-176, His-177, His-229, Asp-253, and His-291 each contribute to the Zn(2+) site.

The protein belongs to the metallo-beta-lactamase superfamily. Glyoxalase II family. As to quaternary structure, isoform 2 interacts with the sarcomeric proteins, MRLC2, MYOM1 and ENO3. Zn(2+) serves as cofactor. Post-translationally, undergoes cleavage at the N-terminus. Expressed in many discrete areas of the brain.

The protein resides in the cell membrane. Its subcellular location is the mitochondrion. The protein localises to the cytoplasm. It carries out the reaction a thioester + H2O = a thiol + a carboxylate + H(+). In terms of biological role, probable thioesterase that may play a role in cellular detoxification processes; it likely acts on a yet-unknown alpha-hydroxythioester substrate. In vitro, it is able to catalyze the hydrolysis of S-D-lactoyl-glutathione to form glutathione and D-lactic acid at very low rate, though this reaction is not physiologically relevant in vivo. The sequence is that of Probable thioesterase PNKD (Pnkd) from Mus musculus (Mouse).